The primary structure comprises 876 residues: GRB2-associated and regulator of MAPK protein (876 aa).

The tract at residues 12-320 (KDVKWSPVAM…HQVKGDMWPE (309 aa)) is CABIT. Tyr105 bears the Phosphotyrosine mark. A disordered region spans residues 427–448 (GDSGSDYLFPEANEESAGIPGK). The residue at position 453 (Tyr453) is a Phosphotyrosine. 2 disordered regions span residues 460-501 (EGKP…ATLG) and 530-572 (LNAP…SYYS). The tract at residues 498–550 (ATLGATIKSSEIALPPPPVPPKSEAVREECRLLNAPPVPPRSAKPLSTSPSIP) is necessary for interaction with GRB2. The span at 560-572 (QTRSPSPTLSYYS) shows a compositional bias: polar residues. Residues Ser609 and Ser613 each carry the phosphoserine modification. Polar residues-rich tracts occupy residues 630-639 (SGASENQTRS) and 647-657 (RSYSYPRQKTP). Disordered stretches follow at residues 630-664 (SGAS…KRTC) and 722-759 (CPAL…TAGS). Positions 811 to 876 (LSIEEVSKSL…QFINGWRPKI (66 aa)) constitute an SAM domain.

The protein belongs to the GAREM family. As to quaternary structure, interacts with EGFR. Interacts (via proline-rich domain and phosphorylated at Tyr-105 and Tyr-453) with GRB2 (via SH3 domains); the interaction occurs upon EGF stimulation. Interacts (phosphorylated at Tyr-453) with PTPN11; the interaction increases MAPK/ERK activity and does not affect the GRB2/SOS complex formation. On EGF stimulation, phosphorylated on Tyr-105 and Tyr-453.

Acts as an adapter protein that plays a role in intracellular signaling cascades triggered either by the cell surface activated epidermal growth factor receptor and/or cytoplasmic protein tyrosine kinases. Promotes activation of the MAPK/ERK signaling pathway. Plays a role in the regulation of cell proliferation. This chain is GRB2-associated and regulator of MAPK protein (Garem1), found in Mus musculus (Mouse).